A 645-amino-acid polypeptide reads, in one-letter code: DNA mismatch repair protein MutL (645 aa).

Positions 371-403 are disordered; sequence VHDQKDKNHDVESHKNNLDSTSSTNNESTEVSN. Over residues 372 to 387 the composition is skewed to basic and acidic residues; sequence HDQKDKNHDVESHKNN. A compositionally biased stretch (low complexity) spans 390–402; it reads STSSTNNESTEVS.

Belongs to the DNA mismatch repair MutL/HexB family.

This protein is involved in the repair of mismatches in DNA. It is required for dam-dependent methyl-directed DNA mismatch repair. May act as a 'molecular matchmaker', a protein that promotes the formation of a stable complex between two or more DNA-binding proteins in an ATP-dependent manner without itself being part of a final effector complex. The polypeptide is DNA mismatch repair protein MutL (Staphylococcus epidermidis (strain ATCC 35984 / DSM 28319 / BCRC 17069 / CCUG 31568 / BM 3577 / RP62A)).